The following is a 317-amino-acid chain: Actin-related protein 2/3 complex subunit 2 (317 aa).

It belongs to the ARPC2 family. Component of the Arp2/3 complex composed of arp2, act2, arc1/p41-ARC, arc2/p34-ARC, arc3/p21-ARC, arc4/p20-ARC and arc5/p16-ARC.

It localises to the cytoplasm. It is found in the cytoskeleton. The protein resides in the actin patch. Functions as actin-binding component of the Arp2/3 complex which is involved in regulation of actin polymerization and together with an activating nucleation-promoting factor (NPF) mediates the formation of branched actin networks. Seems to contact the mother actin filament. The chain is Actin-related protein 2/3 complex subunit 2 (arc2) from Schizosaccharomyces pombe (strain 972 / ATCC 24843) (Fission yeast).